The primary structure comprises 193 residues: FMN-dependent NADH:quinone oxidoreductase 1 (193 aa).

Residues Ser-9, 15-17 (SIS), and 85-88 (MYNF) each bind FMN.

This sequence belongs to the azoreductase type 1 family. As to quaternary structure, homodimer. Requires FMN as cofactor.

The enzyme catalyses 2 a quinone + NADH + H(+) = 2 a 1,4-benzosemiquinone + NAD(+). The catalysed reaction is N,N-dimethyl-1,4-phenylenediamine + anthranilate + 2 NAD(+) = 2-(4-dimethylaminophenyl)diazenylbenzoate + 2 NADH + 2 H(+). In terms of biological role, quinone reductase that provides resistance to thiol-specific stress caused by electrophilic quinones. Functionally, also exhibits azoreductase activity. Catalyzes the reductive cleavage of the azo bond in aromatic azo compounds to the corresponding amines. This chain is FMN-dependent NADH:quinone oxidoreductase 1, found in Xanthomonas axonopodis pv. citri (strain 306).